A 366-amino-acid polypeptide reads, in one-letter code: Alanine racemase (366 aa).

The Proton acceptor; specific for D-alanine role is filled by Lys40. Lys40 is modified (N6-(pyridoxal phosphate)lysine). Arg136 serves as a coordination point for substrate. Tyr263 functions as the Proton acceptor; specific for L-alanine in the catalytic mechanism. Position 310 (Met310) interacts with substrate.

It belongs to the alanine racemase family. The cofactor is pyridoxal 5'-phosphate.

The catalysed reaction is L-alanine = D-alanine. It functions in the pathway amino-acid biosynthesis; D-alanine biosynthesis; D-alanine from L-alanine: step 1/1. Catalyzes the interconversion of L-alanine and D-alanine. May also act on other amino acids. This chain is Alanine racemase (alr), found in Streptococcus pyogenes serotype M28 (strain MGAS6180).